We begin with the raw amino-acid sequence, 498 residues long: Elastase (498 aa).

The N-terminal stretch at 1-23 (MKKVSTLDLLFVAIMGVSPAAFA) is a signal peptide. The propeptide occupies 24-197 (ADLIDVSKLP…VLDQWEGLAH (174 aa)). A disulfide bridge links Cys227 with Cys255. Residue Asp333 coordinates Ca(2+). Residue His337 participates in Zn(2+) binding. Glu338 is a catalytic residue. The Zn(2+) site is built by His341 and Glu361. Ca(2+) is bound by residues Glu369, Glu372, Asp380, and Leu382. His420 acts as the Proton donor in catalysis. A disulfide bond links Cys467 and Cys494.

This sequence belongs to the peptidase M4 family. Monomer. Ca(2+) serves as cofactor. The cofactor is Zn(2+). In terms of processing, made as a membrane-associated pre-pro-protein, which is exported to the periplasm (yielding pro-elastase) with removal of the signal peptide. Under certain conditions pro-elastase can accumulate. The pro-peptide is removed in the periplasm yielding a (mature length) 33 kDa protein, probably by autocatalysis. The pro-peptide probably remains associated with elastase and can be secreted. Further alterations (perhaps processing) seems to be required before secretion into the extracellular space.

It localises to the secreted. It carries out the reaction Hydrolysis of proteins including elastin, collagen types III and IV, fibronectin and immunoglobulin A, generally with bulky hydrophobic group at P1'. Insulin B chain cleavage pattern identical to that of thermolysin, but specificity differs in other respects.. Its activity is regulated as follows. Inhibited by phosphoramidon. Its function is as follows. Cleaves host elastin, collagen, IgG, and several complement components as well as endogenous pro-aminopeptidase. Autocatalyses processing of its pro-peptide. Processes the pro-peptide of pro-chitin-binding protein (cbpD). Involved in the pathogenesis of P.aeruginosa infections. This chain is Elastase (lasB), found in Pseudomonas aeruginosa (strain ATCC 15692 / DSM 22644 / CIP 104116 / JCM 14847 / LMG 12228 / 1C / PRS 101 / PAO1).